A 616-amino-acid chain; its full sequence is Methionine--tRNA ligase, chloroplastic/mitochondrial (616 aa).

A 'HIGH' region motif is present at residues 78-88; sequence YYVNAPPHMGS. Positions 366–370 match the 'KMSKS' region motif; the sequence is KMGKS. Residue Lys369 coordinates ATP. Basic and acidic residues predominate over residues 582–593; the sequence is LNPEKEEDEKKP. Residues 582-602 are disordered; that stretch reads LNPEKEEDEKKPKVGKKTGKA.

It belongs to the class-I aminoacyl-tRNA synthetase family.

The protein resides in the plastid. It is found in the chloroplast. The protein localises to the mitochondrion. It carries out the reaction tRNA(Met) + L-methionine + ATP = L-methionyl-tRNA(Met) + AMP + diphosphate. In Arabidopsis thaliana (Mouse-ear cress), this protein is Methionine--tRNA ligase, chloroplastic/mitochondrial.